The primary structure comprises 203 residues: UPF0637 protein SERP0693 (203 aa).

This sequence belongs to the UPF0637 family.

This Staphylococcus epidermidis (strain ATCC 35984 / DSM 28319 / BCRC 17069 / CCUG 31568 / BM 3577 / RP62A) protein is UPF0637 protein SERP0693.